A 525-amino-acid polypeptide reads, in one-letter code: Nucleolar complex protein 4 homolog (525 aa).

A run of 3 helical transmembrane segments spans residues 305–325 (AAYD…FVPI), 356–376 (FFHL…LVAA), and 384–404 (LSLT…CNLI).

It belongs to the CBF/MAK21 family.

The protein resides in the nucleus membrane. It localises to the nucleus. The protein localises to the nucleolus. The sequence is that of Nucleolar complex protein 4 homolog (noc4l) from Danio rerio (Zebrafish).